The sequence spans 341 residues: MTTILAIETSCDETGVGIARLDADGAVTLLADEVASSVDEHVRFGGVVPEIASRAHLEALGPTMRRALSAAGVTKPDVVAATIGPGLAGALLVGVAAAKAYSAAWGVPFYAVNHLGGHLAADVYQHGPLPECVALLVSGGHTHLLQVRSLGDPIVELGSTVDDAAGEAYDKVARLLGLGYPGGRVLDELARTGDREAIVFPRGMTGPRDAPYAFSFSGLKTAVARYLESHPDAVNADVAAGFQEAVADVLTRKAVRAATDLGVTTLLIAGGVAANSRLRELAEQRCAAAGLTLRIPRPGLCTDNGAMIASFAAHLVAAGAPPSPLDVPTDPGLPVVKAQVS.

The Fe cation site is built by His-114 and His-118. Substrate is bound by residues 136–140 (LVSGG), Asp-170, Gly-183, Asp-187, and Asn-275. Asp-303 is a binding site for Fe cation.

This sequence belongs to the KAE1 / TsaD family. Requires Fe(2+) as cofactor.

The protein localises to the cytoplasm. The catalysed reaction is L-threonylcarbamoyladenylate + adenosine(37) in tRNA = N(6)-L-threonylcarbamoyladenosine(37) in tRNA + AMP + H(+). In terms of biological role, required for the formation of a threonylcarbamoyl group on adenosine at position 37 (t(6)A37) in tRNAs that read codons beginning with adenine. Is involved in the transfer of the threonylcarbamoyl moiety of threonylcarbamoyl-AMP (TC-AMP) to the N6 group of A37, together with TsaE and TsaB. TsaD likely plays a direct catalytic role in this reaction. The sequence is that of tRNA N6-adenosine threonylcarbamoyltransferase from Mycobacterium avium (strain 104).